The chain runs to 203 residues: Holliday junction branch migration complex subunit RuvA (203 aa).

The tract at residues 1–64 (MIGRLRGIVL…EDAQLLFGFN (64 aa)) is domain I. Residues 65–142 (NKQERTLFRE…KGLHGDLFTP (78 aa)) form a domain II region. Residues 143–154 (AADLVLTSPASP) are flexible linker. Residues 155-203 (AVDDAEAEAVAALVSLGYKPQEASRMVSKVAQADASSETLIREALRAAL) form a domain III region.

Belongs to the RuvA family. Homotetramer. Forms an RuvA(8)-RuvB(12)-Holliday junction (HJ) complex. HJ DNA is sandwiched between 2 RuvA tetramers; dsDNA enters through RuvA and exits via RuvB. An RuvB hexamer assembles on each DNA strand where it exits the tetramer. Each RuvB hexamer is contacted by two RuvA subunits (via domain III) on 2 adjacent RuvB subunits; this complex drives branch migration. In the full resolvosome a probable DNA-RuvA(4)-RuvB(12)-RuvC(2) complex forms which resolves the HJ.

The protein localises to the cytoplasm. In terms of biological role, the RuvA-RuvB-RuvC complex processes Holliday junction (HJ) DNA during genetic recombination and DNA repair, while the RuvA-RuvB complex plays an important role in the rescue of blocked DNA replication forks via replication fork reversal (RFR). RuvA specifically binds to HJ cruciform DNA, conferring on it an open structure. The RuvB hexamer acts as an ATP-dependent pump, pulling dsDNA into and through the RuvAB complex. HJ branch migration allows RuvC to scan DNA until it finds its consensus sequence, where it cleaves and resolves the cruciform DNA. The protein is Holliday junction branch migration complex subunit RuvA of Cronobacter sakazakii (strain ATCC BAA-894) (Enterobacter sakazakii).